Consider the following 105-residue polypeptide: Pyrimidine/purine nucleoside phosphorylase (105 aa).

The protein belongs to the nucleoside phosphorylase PpnP family.

It carries out the reaction a purine D-ribonucleoside + phosphate = a purine nucleobase + alpha-D-ribose 1-phosphate. The enzyme catalyses adenosine + phosphate = alpha-D-ribose 1-phosphate + adenine. It catalyses the reaction cytidine + phosphate = cytosine + alpha-D-ribose 1-phosphate. The catalysed reaction is guanosine + phosphate = alpha-D-ribose 1-phosphate + guanine. It carries out the reaction inosine + phosphate = alpha-D-ribose 1-phosphate + hypoxanthine. The enzyme catalyses thymidine + phosphate = 2-deoxy-alpha-D-ribose 1-phosphate + thymine. It catalyses the reaction uridine + phosphate = alpha-D-ribose 1-phosphate + uracil. The catalysed reaction is xanthosine + phosphate = alpha-D-ribose 1-phosphate + xanthine. Catalyzes the phosphorolysis of diverse nucleosides, yielding D-ribose 1-phosphate and the respective free bases. Can use uridine, adenosine, guanosine, cytidine, thymidine, inosine and xanthosine as substrates. Also catalyzes the reverse reactions. This Delftia acidovorans (strain DSM 14801 / SPH-1) protein is Pyrimidine/purine nucleoside phosphorylase.